Reading from the N-terminus, the 424-residue chain is uncharacterized protein (424 aa).

Residue Lys-259 is modified to N6-(pyridoxal phosphate)lysine.

The protein belongs to the class-III pyridoxal-phosphate-dependent aminotransferase family. The cofactor is pyridoxal 5'-phosphate.

This is an uncharacterized protein from Archaeoglobus fulgidus (strain ATCC 49558 / DSM 4304 / JCM 9628 / NBRC 100126 / VC-16).